Here is a 323-residue protein sequence, read N- to C-terminus: Elongation factor P--(R)-beta-lysine ligase (323 aa).

74–76 (SPE) lines the substrate pocket. Residues 98–100 (RNE) and N107 each bind ATP. Residue Y116 coordinates substrate. Residue 242 to 243 (EL) coordinates ATP. Residue E249 participates in substrate binding. ATP is bound at residue G298.

The protein belongs to the class-II aminoacyl-tRNA synthetase family. EpmA subfamily. As to quaternary structure, homodimer.

The enzyme catalyses D-beta-lysine + L-lysyl-[protein] + ATP = N(6)-((3R)-3,6-diaminohexanoyl)-L-lysyl-[protein] + AMP + diphosphate + H(+). Its function is as follows. With EpmB is involved in the beta-lysylation step of the post-translational modification of translation elongation factor P (EF-P). Catalyzes the ATP-dependent activation of (R)-beta-lysine produced by EpmB, forming a lysyl-adenylate, from which the beta-lysyl moiety is then transferred to the epsilon-amino group of a conserved specific lysine residue in EF-P. The chain is Elongation factor P--(R)-beta-lysine ligase from Vibrio campbellii (strain ATCC BAA-1116).